We begin with the raw amino-acid sequence, 427 residues long: Inward rectifier potassium channel 2 (427 aa).

The Cytoplasmic segment spans residues 1–81 (MGSVRTNRYS…IFTTCVDIRW (81 aa)). Residue Cys-76 is modified to S-nitrosocysteine. Residues 82 to 106 (RWMLVIFCLAFVLSWLFFGCVFWLI) traverse the membrane as a helical segment. Residues 107-128 (ALLHGDLDASRESKACVSEVNS) lie on the Extracellular side of the membrane. The segment at residues 129–140 (FTAAFLFSIETQ) is an intramembrane region (helical; Pore-forming). An intramembrane region (pore-forming) is located at residues 141 to 147 (TTIGYGF). The Selectivity filter signature appears at 142-147 (TIGYGF). Residues 148-156 (RCVTDECPV) are Extracellular-facing. The chain crosses the membrane as a helical span at residues 157–178 (AVFMVVFQSIVGCIIDAFIIGA). The Cytoplasmic segment spans residues 179 to 427 (VMAKMAKPKK…PRPLRRESEI (249 aa)). The tract at residues 181–208 (AKMAKPKKRNETLVFSHNAVIAMRDGKL) is polyphosphoinositide (PIP2)-binding. Positions 384 to 427 (SKEEDDSENGVPESTSTDTPPDIDLHNQASVPLEPRPLRRESEI) are disordered. The short motif at 425 to 427 (SEI) is the PDZ-binding element.

It belongs to the inward rectifier-type potassium channel (TC 1.A.2.1) family. KCNJ2 subfamily. As to quaternary structure, homotetramer. Homomultimeric and heteromultimeric association with KCNJ4/Kir2.3. Can form heteromeric channels with Kir2.6/KCNJ18. Associates, via its PDZ-recognition domain, with a complex containing LIN7A, LIN7B, LIN7C, DLG1, CASK and APBA1. Post-translationally, S-nitrosylation increases the open probability and inward rectifying currents. As to expression, highly expressed in the ventricle and skeletal muscle, moderately in cerebrum and cerebellum. Only low levels are detected in kidney or lung.

Its subcellular location is the cell membrane. It is found in the sarcolemma. The protein localises to the T-tubule. The catalysed reaction is K(+)(in) = K(+)(out). Activated by phosphatidylinositol 4,5 biphosphate (PtdIns(4,5)P2). Functionally, inward rectifier potassium channels are characterized by a greater tendency to allow potassium to flow into the cell rather than out of it. Their voltage dependence is regulated by the concentration of extracellular potassium; as external potassium is raised, the voltage range of the channel opening shifts to more positive voltages. The inward rectification is mainly due to the blockage of outward current by internal magnesium. Can be blocked by extracellular barium and cesium. Probably participates in establishing action potential waveform and excitability of neuronal and muscle tissues. The sequence is that of Inward rectifier potassium channel 2 (KCNJ2) from Oryctolagus cuniculus (Rabbit).